The chain runs to 648 residues: Beta-glucuronidase (648 aa).

The first 22 residues, 1-22, serve as a signal peptide directing secretion; sequence MSPRRSVCWFVLGQLLCSCAVA. Residues Asn172 and Asn416 are each glycosylated (N-linked (GlcNAc...) asparagine). Glu447 serves as the catalytic Proton donor. Asn627 carries N-linked (GlcNAc...) asparagine glycosylation.

This sequence belongs to the glycosyl hydrolase 2 family. As to quaternary structure, homotetramer. In terms of processing, undergoes a post-transcriptional proteolytic cleavage near its C-terminal end, which reduces its size by approximately 3 kDa. The site of this cleavage has as yet not been determined.

The protein localises to the lysosome. It carries out the reaction a beta-D-glucuronoside + H2O = D-glucuronate + an alcohol. Inhibited by L-aspartic acid. Functionally, plays an important role in the degradation of dermatan and keratan sulfates. This is Beta-glucuronidase (Gusb) from Rattus norvegicus (Rat).